Here is a 626-residue protein sequence, read N- to C-terminus: MPCVQAQYSPSPPGSSYAAQTYSSEYTTEIMNPDYTKLTMDLGSTEITATATTSLPSISTFVEGYSSNYELKPSCVYQMQRPLIKVEEGRAPSYHHHHHHHHHHHHHHQQQHQQPSIPPASSPEDEVLPSTSMYFKQSPPSTPTTPAFPPQAGALWDEALPSAPGCIAPGPLLDPPMKAVPTVAGARFPLFHFKPSPPHPPAPSPAGGHHLGYDPTAAAALSLPLGAAAAAGSQAAALESHPYGLPLAKRAAPLAFPPLGLTPSPTASSLLGESPSLPSPPSRSSSSGEGTCAVCGDNAACQHYGVRTCEGCKGFFKRTVQKNAKYVCLANKNCPVDKRRRNRCQYCRFQKCLSVGMVKEVVRTDSLKGRRGRLPSKPKSPLQQEPSQPSPPSPPICMMNALVRALTDSTPRDLDYSRYCPTDQAAAGTDAEHVQQFYNLLTASIDVSRSWAEKIPGFTDLPKEDQTLLIESAFLELFVLRLSIRSNTAEDKFVFCNGLVLHRLQCLRGFGEWLDSIKDFSLNLQSLNLDIQALACLSALSMITERHGLKEPKRVEELCNKITSSLKDHQSKGQALEPTESKVLGALVELRKICTLGLQRIFYLKLEDLVSPPSIIDKLFLDTLPF.

The interval 1-108 is activation function (AF)-1 domain; that stretch reads MPCVQAQYSP…HHHHHHHHHH (108 aa). Residues 1–138 are required for DNA-PK heterotrimer; sequence MPCVQAQYSP…PSTSMYFKQS (138 aa). Residues 1–291 are interaction with NCOA1, NCOA2, NCOA3 and KAT2B; that stretch reads MPCVQAQYSP…SRSSSSGEGT (291 aa). Disordered regions lie at residues 92–152, 192–211, and 265–284; these read PSYH…PPQA, HFKP…GHHL, and PTAS…PSRS. The span at 93-110 shows a compositional bias: basic residues; sequence SYHHHHHHHHHHHHHHQQ. 2 stretches are compositionally biased toward pro residues: residues 140–149 and 195–204; these read PSTPTTPAFP and PSPPHPPAPS. The segment covering 268–284 has biased composition (low complexity); the sequence is SSLLGESPSLPSPPSRS. The nuclear receptor DNA-binding region spans 289-364; the sequence is EGTCAVCGDN…VGMVKEVVRT (76 aa). NR C4-type zinc fingers lie at residues 292–312 and 328–352; these read CAVC…CEGC and CLAN…FQKC. The interval 364–394 is disordered; the sequence is TDSLKGRRGRLPSKPKSPLQQEPSQPSPPSP. Residues 377–387 show a composition bias toward low complexity; the sequence is KPKSPLQQEPS. Residues 379–626 are interaction with KAT2B; the sequence is KSPLQQEPSQ…DKLFLDTLPF (248 aa). The region spanning 394–623 is the NR LBD domain; it reads PPICMMNALV…SIIDKLFLDT (230 aa).

It belongs to the nuclear hormone receptor family. NR4 subfamily. In terms of assembly, interacts with SIX3 (via homeobox); differentially regulates the transcriptional activities of NR4A3. Interacts with the constituents of DNA-PK heterotrimer PRKDC, XRCC6 and XRCC5; phosphorylates and prevents NR4A3 ubiquitinylation and degradation. Interacts with NCOA2; potentiates the activity of the NR4A3. Interacts with NCOA1, NCOA3, MED1 and KAT2B. Interacts with EP300 and NCOA2; mediates the recruitment of MED1 in the coactivator complex. Interacts with NR3C1 (via nuclear receptor DNA-binding domain); the interactions represses transcription activity of NR4A3 on the POMC promoter Nur response element (NurRE). Interacts with TRIM28; the interactions potentiates NR4A3 activity on NurRE promoter. Binds DNA as a monomer and homodimer. Interacts with PARP1; activates PARP1 by improving acetylation of PARP1 and suppressing the interaction between PARP1 and SIRT1. Phosphorylated by PRKDC. In terms of tissue distribution, isoform alpha is highly expressed in skeletal muscle. Isoform beta is highly expressed in skeletal muscle and low expressed in fetal brain and placenta.

Its subcellular location is the nucleus. Its function is as follows. Transcriptional activator that binds to regulatory elements in promoter regions in a cell- and response element (target)-specific manner. Induces gene expression by binding as monomers to the NR4A1 response element (NBRE) 5'-AAAAGGTCA-3' site and as homodimers to the Nur response element (NurRE) site in the promoter of their regulated target genes. Plays a role in the regulation of proliferation, survival and differentiation of many different cell types and also in metabolism and inflammation. Mediates proliferation of vascular smooth muscle, myeloid progenitor cell and type B pancreatic cells; promotes mitogen-induced vascular smooth muscle cell proliferation through transactivation of SKP2 promoter by binding a NBRE site. Upon PDGF stimulation, stimulates vascular smooth muscle cell proliferation by regulating CCND1 and CCND2 expression. In islets, induces type B pancreatic cell proliferation through up-regulation of genes that activate cell cycle, as well as genes that cause degradation of the CDKN1A. Negatively regulates myeloid progenitor cell proliferation by repressing RUNX1 in a NBRE site-independent manner. During inner ear, plays a role as a key mediator of the proliferative growth phase of semicircular canal development. Also mediates survival of neuron and smooth muscle cells; mediates CREB-induced neuronal survival, and during hippocampus development, plays a critical role in pyramidal cell survival and axonal guidance. Is required for S phase entry of the cell cycle and survival of smooth muscle cells by inducing CCND1, resulting in RB1 phosphorylation. Binds to NBRE motif in CCND1 promoter, resulting in the activation of the promoter and CCND1 transcription. Also plays a role in inflammation; upon TNF stimulation, mediates monocyte adhesion by inducing the expression of VCAM1 and ICAM1 by binding to the NBRE consensus site. In mast cells activated by Fc-epsilon receptor cross-linking, promotes the synthesis and release of cytokines but impairs events leading to degranulation. Also plays a role in metabolism; by modulating feeding behavior; and by playing a role in energy balance by inhibiting the glucocorticoid-induced orexigenic neuropeptides AGRP expression, at least in part by forming a complex with activated NR3C1 on the AGRP- glucocorticoid response element (GRE), and thus weakening the DNA binding activity of NR3C1. Upon catecholamines stimulation, regulates gene expression that controls oxidative metabolism in skeletal muscle. Plays a role in glucose transport by regulating translocation of the SLC2A4 glucose transporter to the cell surface. Finally, during gastrulation plays a crucial role in the formation of anterior mesoderm by controlling cell migration. Inhibits adipogenesis. Also participates in cardiac hypertrophy by activating PARP1. This Homo sapiens (Human) protein is Nuclear receptor subfamily 4 group A member 3 (NR4A3).